A 250-amino-acid polypeptide reads, in one-letter code: HTH-type transcriptional regulator KipR (250 aa).

An HTH iclR-type domain is found at 5–65; the sequence is NKTVVKSMAL…DASGAYSLGL (61 aa). Positions 26 to 45 form a DNA-binding region, H-T-H motif; sequence LSELVSLTGMPKTSVHRMVS. The region spanning 80–249 is the IclR-ED domain; sequence IRKIAKPVME…ALQISRKIGY (170 aa).

Functionally, transcriptional repressor of the kip gene-containing operon. This chain is HTH-type transcriptional regulator KipR (kipR), found in Bacillus subtilis (strain 168).